A 318-amino-acid polypeptide reads, in one-letter code: Inner membrane protein YbhN (318 aa).

Residues 1–13 lie on the Periplasmic side of the membrane; sequence MSKSHPRWRLAKK. Residues 14–34 form a helical membrane-spanning segment; sequence ILTWLFFIAVIVLLVVYAKKV. At 35–50 the chain is on the cytoplasmic side; it reads DWEEVWKVIRDYNRVA. Residues 51–71 traverse the membrane as a helical segment; it reads LLSAVGLVVVSYLIYGCYDLL. The Periplasmic portion of the chain corresponds to 72-85; the sequence is ARFYCGHKLAKRQV. Residues 86-106 form a helical membrane-spanning segment; it reads MLVSFICYAFNLTLSTWVGGI. Topologically, residues 107 to 125 are cytoplasmic; that stretch reads GMRYRLYSRLGLPGSTITR. A helical transmembrane segment spans residues 126–146; the sequence is IFSLSITTNWLGYILLAGIIF. The Periplasmic portion of the chain corresponds to 147 to 165; it reads TAGVVELPDHWYVDQTTLR. Residues 166–186 traverse the membrane as a helical segment; that stretch reads ILGIGLLMIIAVYLWFCAFAK. Residues 187–205 are Cytoplasmic-facing; sequence HRHMTIKGQKLVLPSWKFA. Residues 206–226 form a helical membrane-spanning segment; the sequence is LAQMLISSVNWMVMGAIIWLL. The Periplasmic portion of the chain corresponds to 227-233; sequence LGQSVNY. The next 2 membrane-spanning stretches (helical) occupy residues 234–254 and 255–275; these read FFVL…HIPA and GIGV…TSKG. Residues 276 to 277 are Periplasmic-facing; sequence TI. The helical transmembrane segment at 278-298 threads the bilayer; sequence IAALLAYRVLYYFIPLLLALI. Topologically, residues 299–318 are cytoplasmic; that stretch reads CYLLLESQAKKLRAKNEAAM.

The protein to Synechocystis PCC 6803 slr0712.

It localises to the cell inner membrane. The polypeptide is Inner membrane protein YbhN (ybhN) (Escherichia coli (strain K12)).